The primary structure comprises 390 residues: Anhydro-N-acetylmuramic acid kinase (390 aa).

9-16 (GTSLDGID) provides a ligand contact to ATP.

The protein belongs to the anhydro-N-acetylmuramic acid kinase family.

The enzyme catalyses 1,6-anhydro-N-acetyl-beta-muramate + ATP + H2O = N-acetyl-D-muramate 6-phosphate + ADP + H(+). It participates in amino-sugar metabolism; 1,6-anhydro-N-acetylmuramate degradation. It functions in the pathway cell wall biogenesis; peptidoglycan recycling. Functionally, catalyzes the specific phosphorylation of 1,6-anhydro-N-acetylmuramic acid (anhMurNAc) with the simultaneous cleavage of the 1,6-anhydro ring, generating MurNAc-6-P. Is required for the utilization of anhMurNAc either imported from the medium or derived from its own cell wall murein, and thus plays a role in cell wall recycling. The sequence is that of Anhydro-N-acetylmuramic acid kinase from Bacillus cereus (strain B4264).